Consider the following 242-residue polypeptide: ATP synthase subunit a (242 aa).

Helical transmembrane passes span 29–49 (SAAYMLLASVLALTYFYLAFS), 84–104 (FVPVIFTLFVFILFCNLFGMI), 114–134 (IIITFALAILVFLMVTIVGFV), 140–160 (FLSLFLPHGTPLWLAPLMIII), 189–209 (VIASFVVTLMIYLKFLPIPLM), and 210–230 (VILIGFEIFVAILQAYIFTIL).

The protein belongs to the ATPase A chain family. In terms of assembly, F-type ATPases have 2 components, CF(1) - the catalytic core - and CF(0) - the membrane proton channel. CF(1) has five subunits: alpha(3), beta(3), gamma(1), delta(1), epsilon(1). CF(0) has three main subunits: a(1), b(2) and c(9-12). The alpha and beta chains form an alternating ring which encloses part of the gamma chain. CF(1) is attached to CF(0) by a central stalk formed by the gamma and epsilon chains, while a peripheral stalk is formed by the delta and b chains.

The protein resides in the cell inner membrane. Key component of the proton channel; it plays a direct role in the translocation of protons across the membrane. The polypeptide is ATP synthase subunit a (Rickettsia bellii (strain RML369-C)).